Reading from the N-terminus, the 504-residue chain is Maturase K (504 aa).

This sequence belongs to the intron maturase 2 family. MatK subfamily.

Its subcellular location is the plastid. It is found in the chloroplast. Its function is as follows. Usually encoded in the trnK tRNA gene intron. Probably assists in splicing its own and other chloroplast group II introns. This chain is Maturase K, found in Gossypium gossypioides (Mexican cotton).